An 86-amino-acid chain; its full sequence is Small ribosomal subunit protein bS20 (86 aa).

This sequence belongs to the bacterial ribosomal protein bS20 family.

Binds directly to 16S ribosomal RNA. The sequence is that of Small ribosomal subunit protein bS20 from Aliarcobacter butzleri (strain RM4018) (Arcobacter butzleri).